The primary structure comprises 187 residues: ATP synthase subunit b 2 (187 aa).

A compositionally biased stretch (basic and acidic residues) spans 1–12 (MAQERAEHESAD). Residues 1-31 (MAQERAEHESADQHTTSTGVPHEGQGEPFPP) form a disordered region. Residues 40–60 (LLIWLAISFLLLYALMSKLVL) traverse the membrane as a helical segment.

It belongs to the ATPase B chain family. In terms of assembly, F-type ATPases have 2 components, F(1) - the catalytic core - and F(0) - the membrane proton channel. F(1) has five subunits: alpha(3), beta(3), gamma(1), delta(1), epsilon(1). F(0) has three main subunits: a(1), b(2) and c(10-14). The alpha and beta chains form an alternating ring which encloses part of the gamma chain. F(1) is attached to F(0) by a central stalk formed by the gamma and epsilon chains, while a peripheral stalk is formed by the delta and b chains.

Its subcellular location is the cell inner membrane. In terms of biological role, f(1)F(0) ATP synthase produces ATP from ADP in the presence of a proton or sodium gradient. F-type ATPases consist of two structural domains, F(1) containing the extramembraneous catalytic core and F(0) containing the membrane proton channel, linked together by a central stalk and a peripheral stalk. During catalysis, ATP synthesis in the catalytic domain of F(1) is coupled via a rotary mechanism of the central stalk subunits to proton translocation. Its function is as follows. Component of the F(0) channel, it forms part of the peripheral stalk, linking F(1) to F(0). The b'-subunit is a diverged and duplicated form of b found in plants and photosynthetic bacteria. The protein is ATP synthase subunit b 2 (atpF2) of Beijerinckia indica subsp. indica (strain ATCC 9039 / DSM 1715 / NCIMB 8712).